The following is a 440-amino-acid chain: (S)-N-methylcoclaurine 3'-hydroxylase-like protein (440 aa).

The helical; Signal-anchor for type II membrane protein transmembrane segment at 2 to 21 (EIVTVALIAIVFTTFLYLIV) threads the bilayer. C430 contributes to the heme binding site.

This sequence belongs to the cytochrome P450 family. Heme is required as a cofactor.

Its subcellular location is the membrane. In terms of biological role, involved in the biosynthesis of benzylisoquinoline alkaloids. Probably involved in papaverine biosynthesis since its transcripts are abundant only in cultivars with substantial papaverine accumulation. May catalyze the 3'-hydroxylation of (S)-coclaurine. The sequence is that of (S)-N-methylcoclaurine 3'-hydroxylase-like protein from Papaver somniferum (Opium poppy).